A 1288-amino-acid polypeptide reads, in one-letter code: Disease resistance protein RRS1 (1288 aa).

Residues Glu5 to His146 form the TIR domain. An important for interaction with RPS4 region spans residues Ser25–His26. In terms of domain architecture, NB-ARC spans Ile170–His421. Gly179–Thr186 contributes to the ATP binding site. LRR repeat units lie at residues Ser498–Asn522, Asn535–Pro553, Asn554–Pro575, His577–Leu598, Ala621–Arg646, Pro665–Pro688, Leu697–Cys720, Leu740–Gly764, Pro766–Ile791, Leu792–Asn807, Leu808–Pro829, and Arg830–Leu852. Positions Arg986–Asp1003 match the Nuclear localization signal motif. Residues Ile1202–Pro1270 constitute a DNA-binding region (WRKY). A disordered region spans residues His1267–Cys1288. The segment covering Ser1279–Cys1288 has biased composition (polar residues).

The protein belongs to the disease resistance TIR-NB-LRR family. Interacts with PopP2, a R.solanacearum type III effector. Interacts with RPS4.

Its subcellular location is the nucleus. It is found in the cytoplasm. Its function is as follows. Transcription factor. Interacts specifically with the W box (5'-(T)TGAC[CT]-3'), a frequently occurring elicitor-responsive cis-acting element. Also acts as a disease resistance protein involved in resistance to fungal and bacterial pathogens, including R.solanacearum, P.syringae pv. tomato and C.higginsianum. Heterodimerization with RPS4 is required to form a functional complex to recognize AvrRps4 and PopP2. Contributes to temperature-conditioned RPS4 auto-immunity. This is Disease resistance protein RRS1 from Arabidopsis thaliana (Mouse-ear cress).